The primary structure comprises 147 residues: Large ribosomal subunit protein uL11 (147 aa).

Belongs to the universal ribosomal protein uL11 family. As to quaternary structure, part of the ribosomal stalk of the 50S ribosomal subunit. Interacts with L10 and the large rRNA to form the base of the stalk. L10 forms an elongated spine to which L12 dimers bind in a sequential fashion forming a multimeric L10(L12)X complex. One or more lysine residues are methylated.

Functionally, forms part of the ribosomal stalk which helps the ribosome interact with GTP-bound translation factors. This chain is Large ribosomal subunit protein uL11, found in Thermus thermophilus (strain ATCC BAA-163 / DSM 7039 / HB27).